The sequence spans 104 residues: Cysteine-rich and transmembrane domain-containing protein 1 (104 aa).

Composition is skewed to pro residues over residues 1–25 (MNPE…PQQP) and 33–47 (GAPP…PPQG). The segment at 1-47 (MNPENPPPYPGPGPTAPYPPYPQQPMGPMGPMGAPPPQGYPYPPPQG) is disordered. The chain crosses the membrane as a helical span at residues 81–98 (LGPSTCLTACWTALCCCC).

It belongs to the CYSTM1 family.

Its subcellular location is the membrane. The protein is Cysteine-rich and transmembrane domain-containing protein 1 (Cystm1) of Mus musculus (Mouse).